Here is a 229-residue protein sequence, read N- to C-terminus: Ras-related protein Rab-33B (229 aa).

The GTP site is built by Asn-43, Val-44, Gly-45, Lys-46, Thr-47, Cys-48, Thr-62, and Thr-65. Residue Thr-47 participates in Mg(2+) binding. The Switch 1 signature appears at 56–68 (GRFPDRTEATIGV). Mg(2+) contacts are provided by Thr-65 and Asp-88. Residues 89-108 (TAGQERFRKSMVQHYYRNVH) carry the Switch 2 motif. 6 residues coordinate GTP: Gly-91, Asn-148, Lys-149, Asp-151, Ala-179, and Lys-180. 2 S-geranylgeranyl cysteine lipidation sites follow: Cys-227 and Cys-229. A Cysteine methyl ester modification is found at Cys-229.

Belongs to the small GTPase superfamily. Rab family. Interacts (GTP- and GDP-bound forms) with ATG16L1; the complex consists of a tetramer where two RAB33B molecules bind independently one molecule of the ATG16L1 homodimer; the interaction promotes ATG12-ATG5-ATG16L1 complex recruitment to phagophores. Interacts with ATG16L2; however interaction is approximately hundred times lower than for ATG16L1. Interacts with RIC1 (via C-terminus domain); the interaction is direct with a preference for RAB33B-GTP. Interacts with RGP1. Mg(2+) is required as a cofactor. Post-translationally, prenylated. As to expression, ubiquitous.

It is found in the golgi apparatus membrane. The protein localises to the golgi apparatus. Its subcellular location is the cis-Golgi network. It localises to the preautophagosomal structure membrane. It carries out the reaction GTP + H2O = GDP + phosphate + H(+). Regulated by guanine nucleotide exchange factors (GEFs) which promote the exchange of bound GDP for free GTP. Regulated by GTPase activating proteins (GAPs) such as SGSM2 which increase the GTP hydrolysis activity. Inhibited by GDP dissociation inhibitors (GDIs). In terms of biological role, the small GTPases Rab are key regulators of intracellular membrane trafficking, from the formation of transport vesicles to their fusion with membranes. Rabs cycle between an inactive GDP-bound form and an active GTP-bound form that is able to recruit to membranes different sets of downstream effectors directly responsible for vesicle formation, movement, tethering and fusion. RAB33B acts, in coordination with RAB6A, to regulate intra-Golgi retrograde trafficking. Participates in autophagosome formation by recruiting the ATG12-ATG5-ATG16L1 complex to phagophores, probably in a nucleotide-independent manner. This Mus musculus (Mouse) protein is Ras-related protein Rab-33B.